Consider the following 346-residue polypeptide: MLLREVTREERKNFYTNEWKVKDIPDFIVKTLELREFGFDHSGEGPSDRKNQYTDIRDLEDYIRATAPYAVYSSVALYEKPQEMEGWLGTELVFDIDAKDLPLRRCEHEPGTVCPICLNDAKEIVRDTVIILREELGFNDIHIIYSGRGYHIRVLDEWALKLDSKSRERILSFVSASEIEDVEEFRKLLLNKRGWFVLNHGYPRAFRLRFGYFILRIKLPHLINAGIRKSIAKSILKSKEEIYEEFVRKAILAAFPQGVGIESLAKLFALSTRFSKSYFDGRVTVDLKRILRLPSTLHSKVGLIAKYVGTNERDVMRFNPFKHAVPKFRKEEVKVEYKKFLESLGT.

Residues Asp95 and Asp97 contribute to the active site. Zn(2+)-binding residues include Cys106, His108, Cys114, and Cys117. A Zinc knuckle motif motif is present at residues 106-117 (CEHEPGTVCPIC). Residue Asp280 is part of the active site.

This sequence belongs to the eukaryotic-type primase small subunit family. In terms of assembly, heterodimer of a small subunit (PriS) and a large subunit (PriL). It depends on Mg(2+) as a cofactor. The cofactor is Mn(2+).

Catalytic subunit of DNA primase, an RNA polymerase that catalyzes the synthesis of short RNA molecules used as primers for DNA polymerase during DNA replication. The small subunit contains the primase catalytic core and has DNA synthesis activity on its own. Binding to the large subunit stabilizes and modulates the activity, increasing the rate of DNA synthesis while decreasing the length of the DNA fragments, and conferring RNA synthesis capability. The DNA polymerase activity may enable DNA primase to also catalyze primer extension after primer synthesis. May also play a role in DNA repair. This Pyrococcus horikoshii (strain ATCC 700860 / DSM 12428 / JCM 9974 / NBRC 100139 / OT-3) protein is DNA primase small subunit PriS.